Consider the following 366-residue polypeptide: D-alanine--D-alanine ligase (366 aa).

An ATP-grasp domain is found at 140–346 (KALFAQSDLP…YGELLSRLVD (207 aa)). 173-228 (EDRLGYPCFVKPANMGSSVGISKATNRAELVAAFDDAVRYDRKLIVEKGINVREIE) is an ATP binding site. Mg(2+)-binding residues include Asp299, Glu313, and Asn315.

This sequence belongs to the D-alanine--D-alanine ligase family. It depends on Mg(2+) as a cofactor. Mn(2+) is required as a cofactor.

Its subcellular location is the cytoplasm. The catalysed reaction is 2 D-alanine + ATP = D-alanyl-D-alanine + ADP + phosphate + H(+). It participates in cell wall biogenesis; peptidoglycan biosynthesis. Cell wall formation. The sequence is that of D-alanine--D-alanine ligase from Heliobacterium modesticaldum (strain ATCC 51547 / Ice1).